Consider the following 1023-residue polypeptide: MAFKVGRDKYEPAAVSEQGDKKGKKGKKDRDMDELKKEVSMDDHKLSLDELHRKYGTDLSRGLTSARAAEILARDGPNALTPPPTTPEWIKFCRQLFGGFSMLLWIGAILCFLAYSIQAATEEEPQNDNLYLGVVLSAVVIITGCFSYYQEAKSSKIMESFKNMVPQQALVIRNGEKMSINAEEVVVGDLVEVKGGDRIPADLRIISANGCKVDNSSLTGESEPQTRSPDFTNENPLETRNIAFFSTNCVEGTARGIVVYTGDRTVMGRIATLASGLEGGQTPIAAEIEHFIHIITGVAVFLGVSFFILSLILEYTWLEAVIFLIGIIVANVPEGLLATVTVCLTLTAKRMARKNCLVKNLEAVETLGSTSTICSDKTGTLTQNRMTVAHMWFDNQIHEAGTTENQSGVSFDKTSATWLALSRIAGLCNRAVFQANQENLPILKRAVAGDASESALLKCIELCCGSVKEMRERYAKIVEIPFNSTNKYQLSIHKNPNTSEPRHLLVMKGAPERILDRCSSILLHGKEQPLDEELKDAFQNAYLELGGLGERVLGFCHLFLPDEQFPEGFQFDTDDVNFPIDNLCFVGLISMIDPPRAAVPDAVGKCRSAGIKVIMVTGDHPITAKAIAKGVGIISEGNETVEDIAARLNIPVSQVNPRDAKACVVHGSDLKDMTSEQLDDILKYHTEIVFARTSPQQKLIIVEGCQRQGAIVAVTGDGVNDSPALKKADIGVAMGIAGSDVSKQAADMILLDDNFASIVTGVEEGRLIFDNLKKSIAYTLTSNIPEITPFLIFIIANIPLPLGTVTILCIDLGTDMVPAISLAYEQAESDIMKRQPRNPKTDKLVNERLISTAYGQIGMIQALGGFFTYFVILAENGFLPLHLLGLRVDWDDRWINDVEDSYGQQWTYEQRKIVEFTCHTAFFVSIVVVQWADLVICKTRRNSVFQQGMKNKILIFGLFEETALAAFLSYCPGMGVALRMYPLKPTWWFCAFPYSLLIFVYDEVRKLIIRRRPGGWVEKETYY.

A propeptide spanning residues 1 to 5 (MAFKV) is cleaved from the precursor. Residues 1-11 (MAFKVGRDKYE) show a composition bias toward basic and acidic residues. Residues 1–38 (MAFKVGRDKYEPAAVSEQGDKKGKKGKKDRDMDELKKE) form a disordered region. Topologically, residues 6–87 (GRDKYEPAAV…NALTPPPTTP (82 aa)) are cytoplasmic. Lys-9 bears the N6-acetyllysine mark. The residue at position 10 (Tyr-10) is a Phosphotyrosine. Ser-16 carries the post-translational modification Phosphoserine; by PKC. Residue Lys-21 is modified to N6-acetyllysine. The span at 28-38 (KDRDMDELKKE) shows a compositional bias: basic and acidic residues. A phosphoserine mark is found at Ser-40 and Ser-47. The interval 82–84 (PPP) is phosphoinositide-3 kinase binding. The helical transmembrane segment at 88–108 (EWIKFCRQLFGGFSMLLWIGA) threads the bilayer. The Extracellular segment spans residues 109–131 (ILCFLAYSIQAATEEEPQNDNLY). The chain crosses the membrane as a helical span at residues 132–152 (LGVVLSAVVIITGCFSYYQEA). The Cytoplasmic segment spans residues 153 to 288 (KSSKIMESFK…GGQTPIAAEI (136 aa)). Residues 216–235 (SSLTGESEPQTRSPDFTNEN) form a disordered region. Ser-228 bears the Phosphoserine mark. Phosphotyrosine is present on Tyr-260. The helical transmembrane segment at 289–308 (EHFIHIITGVAVFLGVSFFI) threads the bilayer. At 309 to 320 (LSLILEYTWLEA) the chain is on the extracellular side. A helical transmembrane segment spans residues 321–338 (VIFLIGIIVANVPEGLLA). At 339-772 (TVTVCLTLTA…EEGRLIFDNL (434 aa)) the chain is on the cytoplasmic side. The active-site 4-aspartylphosphate intermediate is Asp-376. Residues Ser-452 and Ser-484 each carry the phosphoserine modification. Lys-487 provides a ligand contact to ATP. The residue at position 542 (Tyr-542) is a Phosphotyrosine. The interval 596–717 (RAAVPDAVGK…QGAIVAVTGD (122 aa)) is mediates interaction with SCN7A. At Lys-661 the chain carries N6-succinyllysine. 2 positions are modified to phosphoserine: Ser-668 and Ser-675. Residues Asp-717 and Asp-721 each coordinate Mg(2+). A helical transmembrane segment spans residues 773–792 (KKSIAYTLTSNIPEITPFLI). At 793-802 (FIIANIPLPL) the chain is on the extracellular side. The helical transmembrane segment at 803 to 823 (GTVTILCIDLGTDMVPAISLA) threads the bilayer. Topologically, residues 824-843 (YEQAESDIMKRQPRNPKTDK) are cytoplasmic. Residues 844–866 (LVNERLISTAYGQIGMIQALGGF) traverse the membrane as a helical segment. At 867 to 918 (FTYFVILAENGFLPLHLLGLRVDWDDRWINDVEDSYGQQWTYEQRKIVEFTC) the chain is on the extracellular side. The chain crosses the membrane as a helical span at residues 919 to 938 (HTAFFVSIVVVQWADLVICK). Residues 939-951 (TRRNSVFQQGMKN) are Cytoplasmic-facing. At Ser-943 the chain carries Phosphoserine; by PKA. A helical transmembrane segment spans residues 952 to 970 (KILIFGLFEETALAAFLSY). The Extracellular segment spans residues 971–985 (CPGMGVALRMYPLKP). A helical transmembrane segment spans residues 986–1006 (TWWFCAFPYSLLIFVYDEVRK). Residues 1007 to 1023 (LIIRRRPGGWVEKETYY) are Cytoplasmic-facing.

Belongs to the cation transport ATPase (P-type) (TC 3.A.3) family. Type IIC subfamily. The sodium/potassium-transporting ATPase is composed of a catalytic alpha subunit, an auxiliary non-catalytic beta subunit and an additional regulatory subunit. Interacts with regulatory subunit FXYD1. Interacts with regulatory subunit FXYD3. Interacts with SIK1. Interacts with SLC35G1 and STIM1. Interacts with CLN3; this interaction regulates the sodium/potassium-transporting ATPase complex localization at the plasma membrane. Interacts with SCN7A; activates ATP1A1 P-type sodium:potassium-exchanging transporter activity which indirectly signals to nearby neurons to regulate sodium homeostasis. Phosphorylation on Tyr-10 modulates pumping activity. Phosphorylation of Ser-943 by PKA modulates the response of ATP1A1 to PKC. Dephosphorylation by protein phosphatase 2A (PP2A) following increases in intracellular sodium, leading to increase catalytic activity.

The protein resides in the cell membrane. Its subcellular location is the basolateral cell membrane. It localises to the sarcolemma. The protein localises to the cell projection. It is found in the axon. The protein resides in the melanosome. The enzyme catalyses K(+)(out) + Na(+)(in) + ATP + H2O = K(+)(in) + Na(+)(out) + ADP + phosphate + H(+). This is the catalytic component of the active enzyme, which catalyzes the hydrolysis of ATP coupled with the exchange of sodium and potassium ions across the plasma membrane. This action creates the electrochemical gradient of sodium and potassium ions, providing the energy for active transport of various nutrients. Could also be part of an osmosensory signaling pathway that senses body-fluid sodium levels and controls salt intake behavior as well as voluntary water intake to regulate sodium homeostasis. The polypeptide is Sodium/potassium-transporting ATPase subunit alpha-1 (ATP1A1) (Pongo abelii (Sumatran orangutan)).